A 185-amino-acid chain; its full sequence is NOP protein chaperone 1 (185 aa).

Residues 1 to 40 (MEVHGKPKASPSCSSPTRDSSGVPVSKELLTAGSDGRGGI) are disordered. A compositionally biased stretch (low complexity) spans 10-21 (SPSCSSPTRDSS). Phosphoserine occurs at positions 34 and 66. Residues 118-185 (FEMNQSDSKE…LDSPASKKKK (68 aa)) form a disordered region. Positions 143–152 (SESEDEDDSI) are enriched in acidic residues. Serine 178 carries the phosphoserine modification.

As to quaternary structure, interacts with NOP58, RUVBL1 and RUVBL2; the interactions are direct and NOPCHAP1 bridges the association of NOP58 with RUVBL1:RUVBL2 even in absence of snoRNAs. The interactions with RUVBL1 and RUVBL2 are disrupted upon ATP binding.

It localises to the nucleus. In terms of biological role, client-loading PAQosome/R2TP complex cofactor that selects NOP58 to promote box C/D small nucleolar ribonucleoprotein (snoRNP) assembly. Acts as a bridge between NOP58 and the R2TP complex via RUVBL1:RUVBL2. The polypeptide is NOP protein chaperone 1 (Homo sapiens (Human)).